The sequence spans 314 residues: Formate-nitrite transporter (314 aa).

The Cytoplasmic segment spans residues 1–47 (MQKSTSKYVIDPISIKTNCSSEESYIRCVEYGKGKAHYRNLILLAKA). A helical membrane pass occupies residues 48-68 (ILAGVFVGVCAHASGIAGGLF). The Extracellular segment spans residues 69–77 (YYHKLREYV). The helical transmembrane segment at 78-98 (GISMSAFVYGFTFPIAFLCII) threads the bilayer. At 99-128 (CTGSDLFTGNTLAVTTALLQKKLGLLCYMR) the chain is on the cytoplasmic side. A helical transmembrane segment spans residues 129–149 (VMCISLVGNYIGAVAFAFFVS). The Extracellular portion of the chain corresponds to 150–185 (YGSGAFSINTDTSKNHIFQFLNDIAIKKVSHSFIEC). The chain crosses the membrane as a helical span at residues 186–206 (ICLAIGCNIFVCLAVYFVLSI). Residues 207–211 (KDGSG) lie on the Cytoplasmic side of the membrane. A helical transmembrane segment spans residues 212–232 (LVFSVFFAVYAFAIAGYEHII). The Extracellular portion of the chain corresponds to 233 to 260 (ANIYTLNLALMISNDISFTQVYFKNLLP). Residues 261 to 281 (TLIGNYIAGGLVLAFPLFFIY) traverse the membrane as a helical segment. Over 282 to 314 (RSCYYDYDKMNDELNTVVLKTLSLELQNESNHI) the chain is Cytoplasmic.

Belongs to the FNT transporter (TC 1.A.16) family. Homopentamer.

The protein localises to the cell membrane. It localises to the vacuole membrane. It carries out the reaction (S)-lactate(in) + H(+)(in) = (S)-lactate(out) + H(+)(out). The catalysed reaction is formate(in) + H(+)(in) = formate(out) + H(+)(out). The enzyme catalyses pyruvate(out) + H(+)(out) = pyruvate(in) + H(+)(in). It catalyses the reaction acetate(out) + H(+)(out) = acetate(in) + H(+)(in). With respect to regulation, inhibited by the Malaria Box compound MMV007839 and its derivatives BH296 and BH267.meta. Monocarboxylate-proton symporter that mediates the efflux of the waste product lactate in the intraerythrocytic parasites; active in acidic-to-neutral pH range. Transports L-lactate. The sequence is that of Formate-nitrite transporter from Plasmodium malariae.